We begin with the raw amino-acid sequence, 178 residues long: Large ribosomal subunit protein uL6 (178 aa).

It belongs to the universal ribosomal protein uL6 family. In terms of assembly, part of the 50S ribosomal subunit.

Functionally, this protein binds to the 23S rRNA, and is important in its secondary structure. It is located near the subunit interface in the base of the L7/L12 stalk, and near the tRNA binding site of the peptidyltransferase center. The chain is Large ribosomal subunit protein uL6 from Nitratiruptor sp. (strain SB155-2).